A 132-amino-acid chain; its full sequence is Large ribosomal subunit protein bL21 (132 aa).

Residues 112–132 (AEKPARKPRAKKTNEVTTDGA) are disordered.

The protein belongs to the bacterial ribosomal protein bL21 family. In terms of assembly, part of the 50S ribosomal subunit. Contacts protein L20.

Its function is as follows. This protein binds to 23S rRNA in the presence of protein L20. The polypeptide is Large ribosomal subunit protein bL21 (Dehalococcoides mccartyi (strain ATCC BAA-2266 / KCTC 15142 / 195) (Dehalococcoides ethenogenes (strain 195))).